A 603-amino-acid polypeptide reads, in one-letter code: DNA mismatch repair protein MutL (603 aa).

Belongs to the DNA mismatch repair MutL/HexB family.

Functionally, this protein is involved in the repair of mismatches in DNA. It is required for dam-dependent methyl-directed DNA mismatch repair. May act as a 'molecular matchmaker', a protein that promotes the formation of a stable complex between two or more DNA-binding proteins in an ATP-dependent manner without itself being part of a final effector complex. The sequence is that of DNA mismatch repair protein MutL from Listeria monocytogenes serotype 4a (strain HCC23).